The chain runs to 1500 residues: Myosin-8 (1500 aa).

Positions 8–57 (AVGSHVWVEDPDEAWLDGEVVEINGDQIKVLCASGKQVVVKDSNIYPKDV) constitute a Myosin N-terminal SH3-like domain. A Myosin motor domain is found at 62-732 (SGVEDMTRLA…QMADLDTRRT (671 aa)). Residues 156-163 (GESGAGKT) and 210-218 (NNNSSRFGK) each bind ATP. 4 actin-binding regions span residues 496–530 (LIEK…YQTY), 532–555 (NHKR…AGDV), 590–613 (FPPV…KQQL), and 613–635 (LVSL…KPNN). 6 IQ domains span residues 735–764 (LGRS…SATQ), 758–787 (LRIS…EAAA), 783–812 (REAA…ATIL), 806–835 (LFSA…TKAA), 831–860 (QTKA…AAIT), and 854–883 (LKKA…AARE). Positions 884 to 1049 (TGALQEAKNK…TEKQIMLQQT (166 aa)) form a coiled coil. Residues 1146–1447 (DRLIEMIGSA…ISSMRALMTE (302 aa)) enclose the Dilute domain.

This sequence belongs to the TRAFAC class myosin-kinesin ATPase superfamily. Myosin family. Plant myosin class XI subfamily. As to quaternary structure, homodimer.

The protein resides in the cytoplasm. Myosin heavy chain that is required for the cell cycle-regulated transport of various organelles and proteins for their segregation. Functions by binding with its tail domain to receptor proteins on organelles and exerting force with its N-terminal motor domain against actin filaments, thereby transporting its cargo along polarized actin cables. This chain is Myosin-8 (XI-B), found in Arabidopsis thaliana (Mouse-ear cress).